The chain runs to 74 residues: Protein F9 homolog (74 aa).

At 1-34 (GHAAANCALARVATALTRRVPASRHGLAEGGTPP) the chain is on the virion surface side. A helical transmembrane segment spans residues 35 to 55 (WTLLLAVAAVAVLGVVAISLL). The Intravirion portion of the chain corresponds to 56–73 (RRALRIRFRYSKSIQTLR).

Belongs to the chordopoxvirinae L1 protein family.

It is found in the virion membrane. In Capra hircus (Goat), this protein is Protein F9 homolog.